We begin with the raw amino-acid sequence, 155 residues long: Large ribosomal subunit protein uL30 (155 aa).

This sequence belongs to the universal ribosomal protein uL30 family. Part of the 50S ribosomal subunit.

In Pyrococcus horikoshii (strain ATCC 700860 / DSM 12428 / JCM 9974 / NBRC 100139 / OT-3), this protein is Large ribosomal subunit protein uL30.